The chain runs to 436 residues: Mannan endo-1,4-beta-mannosidase F (436 aa).

The first 18 residues, methionine 1–alanine 18, serve as a signal peptide directing secretion. The CBM1 domain maps to glutamine 19–glutamine 54. The segment at serine 60–proline 88 is disordered. The segment at serine 79–glycine 113 is ser-rich linker. The tract at residues threonine 114 to isoleucine 436 is catalytic. 2 residues coordinate substrate: tryptophan 146 and asparagine 260. The active-site Proton donor is glutamate 261. Substrate is bound at residue tyrosine 336. Glutamate 370 (nucleophile) is an active-site residue. Residue tryptophan 400 participates in substrate binding.

It belongs to the glycosyl hydrolase 5 (cellulase A) family.

It is found in the secreted. It carries out the reaction Random hydrolysis of (1-&gt;4)-beta-D-mannosidic linkages in mannans, galactomannans and glucomannans.. In terms of biological role, endo-1,4-mannanase, a crucial enzyme for depolymerization of seed galactomannans and wood galactoglucomannans. This Aspergillus clavatus (strain ATCC 1007 / CBS 513.65 / DSM 816 / NCTC 3887 / NRRL 1 / QM 1276 / 107) protein is Mannan endo-1,4-beta-mannosidase F (manF).